The following is a 1095-amino-acid chain: Putative disease resistance protein At4g11170 (1095 aa).

Residues Trp-9–Leu-173 form the TIR domain. Residue Glu-84 is part of the active site. The NB-ARC domain occupies Asp-168–Ile-454. LRR repeat units lie at residues Cys-609 to Arg-631, Asn-632 to Thr-654, Lys-655 to Leu-677, His-679 to Pro-701, Ser-702 to Thr-722, and Asn-723 to Trp-744.

The enzyme catalyses NAD(+) + H2O = ADP-D-ribose + nicotinamide + H(+). This Arabidopsis thaliana (Mouse-ear cress) protein is Putative disease resistance protein At4g11170.